A 361-amino-acid polypeptide reads, in one-letter code: T-box-containing protein TBX6L (361 aa).

A DNA-binding region (T-box) is located at residues 36–209 (LWMKFHQIGT…NNPFAKGFRE (174 aa)). Disordered regions lie at residues 203-259 (FAKG…VKEE) and 280-323 (HAFP…QLPS). Basic and acidic residues-rich tracts occupy residues 206–220 (GFRE…EGRA) and 234–259 (KLPE…VKEE). The span at 280 to 290 (HAFPAASPAPA) shows a compositional bias: low complexity.

The protein resides in the nucleus. May be involved in regulating somitogenesis. This is T-box-containing protein TBX6L (TBX6L) from Gallus gallus (Chicken).